Consider the following 327-residue polypeptide: Phenylalanine--tRNA ligase alpha subunit (327 aa).

Position 252 (Glu-252) interacts with Mg(2+).

It belongs to the class-II aminoacyl-tRNA synthetase family. Phe-tRNA synthetase alpha subunit type 1 subfamily. As to quaternary structure, tetramer of two alpha and two beta subunits. Mg(2+) is required as a cofactor.

Its subcellular location is the cytoplasm. The catalysed reaction is tRNA(Phe) + L-phenylalanine + ATP = L-phenylalanyl-tRNA(Phe) + AMP + diphosphate + H(+). The polypeptide is Phenylalanine--tRNA ligase alpha subunit (Shigella flexneri).